The following is a 374-amino-acid chain: UDP-N-acetylglucosamine--N-acetylmuramyl-(pentapeptide) pyrophosphoryl-undecaprenol N-acetylglucosamine transferase (374 aa).

Residues 13–15, asparagine 124, arginine 165, serine 193, and glutamine 294 each bind UDP-N-acetyl-alpha-D-glucosamine; that span reads TGG.

It belongs to the glycosyltransferase 28 family. MurG subfamily.

It is found in the cell inner membrane. The catalysed reaction is di-trans,octa-cis-undecaprenyl diphospho-N-acetyl-alpha-D-muramoyl-L-alanyl-D-glutamyl-meso-2,6-diaminopimeloyl-D-alanyl-D-alanine + UDP-N-acetyl-alpha-D-glucosamine = di-trans,octa-cis-undecaprenyl diphospho-[N-acetyl-alpha-D-glucosaminyl-(1-&gt;4)]-N-acetyl-alpha-D-muramoyl-L-alanyl-D-glutamyl-meso-2,6-diaminopimeloyl-D-alanyl-D-alanine + UDP + H(+). The protein operates within cell wall biogenesis; peptidoglycan biosynthesis. In terms of biological role, cell wall formation. Catalyzes the transfer of a GlcNAc subunit on undecaprenyl-pyrophosphoryl-MurNAc-pentapeptide (lipid intermediate I) to form undecaprenyl-pyrophosphoryl-MurNAc-(pentapeptide)GlcNAc (lipid intermediate II). The chain is UDP-N-acetylglucosamine--N-acetylmuramyl-(pentapeptide) pyrophosphoryl-undecaprenol N-acetylglucosamine transferase from Rhizobium meliloti (strain 1021) (Ensifer meliloti).